A 500-amino-acid polypeptide reads, in one-letter code: Glycerol kinase (500 aa).

Threonine 11 is an ADP binding site. Threonine 11, threonine 12, and serine 13 together coordinate ATP. Threonine 11 is a sn-glycerol 3-phosphate binding site. An ADP-binding site is contributed by arginine 15. Sn-glycerol 3-phosphate-binding residues include arginine 81, glutamate 82, tyrosine 133, and aspartate 242. Glycerol contacts are provided by arginine 81, glutamate 82, tyrosine 133, aspartate 242, and glutamine 243. ADP-binding residues include threonine 264 and glycine 307. ATP is bound by residues threonine 264, glycine 307, glutamine 311, and glycine 411. Glycine 411 is a binding site for ADP.

This sequence belongs to the FGGY kinase family.

It carries out the reaction glycerol + ATP = sn-glycerol 3-phosphate + ADP + H(+). It functions in the pathway polyol metabolism; glycerol degradation via glycerol kinase pathway; sn-glycerol 3-phosphate from glycerol: step 1/1. Its activity is regulated as follows. Inhibited by fructose 1,6-bisphosphate (FBP). In terms of biological role, key enzyme in the regulation of glycerol uptake and metabolism. Catalyzes the phosphorylation of glycerol to yield sn-glycerol 3-phosphate. In Rhodopseudomonas palustris (strain BisA53), this protein is Glycerol kinase.